A 412-amino-acid polypeptide reads, in one-letter code: Allantoate amidohydrolase (412 aa).

Zn(2+) contacts are provided by His-84, Asp-95, Glu-130, and His-193. Positions 218, 278, and 291 each coordinate allantoate. Residue His-385 participates in Zn(2+) binding.

It belongs to the peptidase M20 family. Homodimer. It depends on Zn(2+) as a cofactor.

The protein resides in the cytoplasm. It catalyses the reaction allantoate + H2O + 2 H(+) = (S)-2-ureidoglycine + NH4(+) + CO2. It participates in nitrogen metabolism; (S)-allantoin degradation. Its function is as follows. Involved in the anaerobic nitrogen utilization via the assimilation of allantoin. Catalyzes specifically the hydrolysis of allantoate to yield CO2, NH3 and S-ureidoglycine, which is unstable and readily undergoes a second deamination by S-ureidoglycine aminohydrolase AllE to yield S-ureidoglycolate and NH3. The protein is Allantoate amidohydrolase of Bacillus subtilis (strain 168).